A 146-amino-acid chain; its full sequence is MORN repeat-containing protein 4 (146 aa).

MORN repeat units lie at residues 16-38, 39-61, 62-84, and 85-107; these read YRGE…DGGT, YLGH…DGSR, YEGE…DNMT, and FEGE…DGSH.

Interacts with MYO3A. Retina.

It localises to the cytoplasm. The protein resides in the cell projection. The protein localises to the filopodium tip. Its subcellular location is the stereocilium. Plays a role in promoting axonal degeneration following neuronal injury by toxic insult or trauma. This is MORN repeat-containing protein 4 (MORN4) from Bos taurus (Bovine).